The sequence spans 500 residues: Pyruvate kinase 1 (500 aa).

N-acetylserine is present on Ser-2. Ser-9 and Ser-16 each carry phosphoserine. Position 31 is a phosphothreonine (Thr-31). Arg-49 contacts substrate. Residues Asn-51 and Ser-53 each contribute to the K(+) site. Residue 51 to 54 (NFSH) participates in ATP binding. Ser-70 bears the Phosphoserine mark. Residues Asp-84 and Thr-85 each contribute to the K(+) site. Arg-91 lines the ATP pocket. Residues Lys-119, Lys-124, Lys-161, Lys-164, and Lys-166 each participate in a glycyl lysine isopeptide (Lys-Gly) (interchain with G-Cter in URM1) cross-link. Position 177 (Lys-177) interacts with ATP. Thr-184 is subject to Phosphothreonine. Lys-204 participates in a covalent cross-link: Glycyl lysine isopeptide (Lys-Gly) (interchain with G-Cter in ubiquitin). A Phosphoserine modification is found at Ser-213. A substrate-binding site is contributed by Lys-240. Glu-242 serves as a coordination point for Mn(2+). Lys-255 is covalently cross-linked (Glycyl lysine isopeptide (Lys-Gly) (interchain with G-Cter in ubiquitin)). Gly-265 and Asp-266 together coordinate substrate. Asp-266 is a binding site for Mn(2+). Lys-292 participates in a covalent cross-link: Glycyl lysine isopeptide (Lys-Gly) (interchain with G-Cter in URM1). Thr-298 provides a ligand contact to substrate. A Phosphoserine modification is found at Ser-316. Residue Lys-394 forms a Glycyl lysine isopeptide (Lys-Gly) (interchain with G-Cter in URM1) linkage. 402 to 407 (STSGTT) is a beta-D-fructose 1,6-bisphosphate binding site. Position 418 is a cysteine persulfide (Cys-418). Lys-446 participates in a covalent cross-link: Glycyl lysine isopeptide (Lys-Gly) (interchain with G-Cter in ubiquitin); alternate. A Glycyl lysine isopeptide (Lys-Gly) (interchain with G-Cter in URM1); alternate cross-link involves residue Lys-446. Ser-450 carries the phosphoserine modification. 2 residues coordinate beta-D-fructose 1,6-bisphosphate: Trp-452 and Arg-459. Phosphothreonine is present on Thr-478. A beta-D-fructose 1,6-bisphosphate-binding site is contributed by Gly-484.

Belongs to the pyruvate kinase family. As to quaternary structure, homotetramer. Mg(2+) serves as cofactor. K(+) is required as a cofactor. Conjugated to URM1, a ubiquitin-like protein, in response to oxidative stresses. The attachment of URM1 to lysine residues exclusively depends on the presence of a peroxidatic cysteine in the target protein, with low specificity for the particular residue, motif, or structural context at which urmylation can occur. The URM1-conjugation reaction is mechanistically and directly coupled to the process of cysteine persulfidation, transfering the sulfur atom of the URM1 thiocarboxyl group to redox-active cysteine residues in the target protein if it is exposed to oxidative conditions. In terms of processing, persulfidated on specific redox-active cysteine residues. Persulfidation (also called protein S-sulfhydration) may provide a molecular mechanism that enables cells to protect vulnerable cysteine residues from reactive oxygen species (ROS) under stress conditions.

It carries out the reaction pyruvate + ATP = phosphoenolpyruvate + ADP + H(+). The protein operates within carbohydrate degradation; glycolysis; pyruvate from D-glyceraldehyde 3-phosphate: step 5/5. With respect to regulation, the activity is regulated by glucose levels. Activated by fructose-1,6-bisphosphate. The sequence is that of Pyruvate kinase 1 (CDC19) from Saccharomyces cerevisiae (strain ATCC 204508 / S288c) (Baker's yeast).